The chain runs to 255 residues: DNA repair protein RecO (255 aa).

This sequence belongs to the RecO family.

Functionally, involved in DNA repair and RecF pathway recombination. This chain is DNA repair protein RecO, found in Listeria monocytogenes serotype 4a (strain HCC23).